The primary structure comprises 1225 residues: RNA-directed RNA polymerase VP2 (1225 aa).

Residues Leu-497 to Val-727 enclose the RdRp catalytic domain.

It belongs to the reoviridae RNA-directed RNA polymerase family. As to quaternary structure, interacts with VP6.

It catalyses the reaction RNA(n) + a ribonucleoside 5'-triphosphate = RNA(n+1) + diphosphate. In terms of biological role, RNA-directed RNA polymerase that is involved in transcription and genome replication. Following infection, it catalyzes the synthesis of fully conservative plus strands. After core assembly, which consists in recruitment of one capped plus-strand for each genomic segments and polymerase complexes, the polymerase switches mode and catalyzes the synthesis of complementary minus-strands. This is RNA-directed RNA polymerase VP2 (S2) from Lymantria dispar (Gypsy moth).